The primary structure comprises 279 residues: Large ribosomal subunit protein uL24m (279 aa).

The transit peptide at 1 to 31 (MRDLRKLIPRLRGPGTNVLKMKKPLPLHMRT) directs the protein to the mitochondrion. Residues 34–51 (REHLNKSDPTVKDDKSAK) are compositionally biased toward basic and acidic residues. Positions 34-56 (REHLNKSDPTVKDDKSAKPELPF) are disordered. A KOW domain is found at 70–100 (KGDYVYVHQGPLKGKWGRVVETNKYTNGITI). The disordered stretch occupies residues 185–204 (PRPKTEDKPKDPEGKLDTKN). Residues 187–202 (PKTEDKPKDPEGKLDT) show a composition bias toward basic and acidic residues.

The protein belongs to the universal ribosomal protein uL24 family. Component of the mitochondrial large ribosomal subunit (mt-LSU). Mature yeast 74S mitochondrial ribosomes consist of a small (37S) and a large (54S) subunit. The 37S small subunit contains a 15S ribosomal RNA (15S mt-rRNA) and at least 32 different proteins. The 54S large subunit contains a 21S rRNA (21S mt-rRNA) and at least 45 different proteins. uL24m forms the wall of the exit tunnel.

It is found in the mitochondrion. Component of the mitochondrial ribosome (mitoribosome), a dedicated translation machinery responsible for the synthesis of mitochondrial genome-encoded proteins, including at least some of the essential transmembrane subunits of the mitochondrial respiratory chain. The mitoribosomes are attached to the mitochondrial inner membrane and translation products are cotranslationally integrated into the membrane. The polypeptide is Large ribosomal subunit protein uL24m (mrpl40) (Schizosaccharomyces pombe (strain 972 / ATCC 24843) (Fission yeast)).